The primary structure comprises 111 residues: Large ribosomal subunit protein uL22 (111 aa).

Belongs to the universal ribosomal protein uL22 family. In terms of assembly, part of the 50S ribosomal subunit.

In terms of biological role, this protein binds specifically to 23S rRNA; its binding is stimulated by other ribosomal proteins, e.g. L4, L17, and L20. It is important during the early stages of 50S assembly. It makes multiple contacts with different domains of the 23S rRNA in the assembled 50S subunit and ribosome. Functionally, the globular domain of the protein is located near the polypeptide exit tunnel on the outside of the subunit, while an extended beta-hairpin is found that lines the wall of the exit tunnel in the center of the 70S ribosome. The polypeptide is Large ribosomal subunit protein uL22 (Xylella fastidiosa (strain M23)).